We begin with the raw amino-acid sequence, 143 residues long: MWTDRLYRVEPYRMLFQWVKDEGNGIYSVGMASILAALAYPLYSIKIKPVGTKLEYDEALAIIEAGKRVATFPTPLSGIVVDVNEEVIKNPELINKKPYSSWIAKLKATNLEEVKNLQSAKEIVKTVKDFIILEDVDCSIVEE.

In terms of domain architecture, Lipoyl-binding spans 26–107 (IYSVGMASIL…PYSSWIAKLK (82 aa)). Position 67 is an N6-lipoyllysine (K67).

This sequence belongs to the GcvH family. The glycine cleavage system is composed of four proteins: P, T, L and H. (R)-lipoate is required as a cofactor.

Its function is as follows. The glycine cleavage system catalyzes the degradation of glycine. The H protein shuttles the methylamine group of glycine from the P protein to the T protein. The protein is Glycine cleavage system H protein 1 of Aquifex aeolicus (strain VF5).